The primary structure comprises 384 residues: Ubiquitin-like modifier-activating enzyme 5 (384 aa).

ATP is bound by residues Gly63, Asp84, Lys107, Asn130, and Asn164. 2 residues coordinate Zn(2+): Cys206 and Cys209. Cys230 functions as the Glycyl thioester intermediate in the catalytic mechanism. 2 residues coordinate Zn(2+): Cys283 and Cys288. Residues 352-375 (EAPEKSSAEATQAATAPVDDTSLE) form a disordered region.

This sequence belongs to the ubiquitin-activating E1 family. UBA5 subfamily.

In terms of biological role, E1-like enzyme which activates UFM1. The sequence is that of Ubiquitin-like modifier-activating enzyme 5 from Drosophila persimilis (Fruit fly).